Reading from the N-terminus, the 217-residue chain is uncharacterized protein (217 aa).

In terms of domain architecture, ABC transporter spans 14–217 (LAVNNLCIER…NELATEIISL (204 aa)). ATP is bound at residue 46–53 (GEIGSGKT).

This sequence belongs to the ABC transporter superfamily.

This is an uncharacterized protein from Haemophilus influenzae (strain ATCC 51907 / DSM 11121 / KW20 / Rd).